Consider the following 442-residue polypeptide: Mimosinase, chloroplastic (442 aa).

Residues 1 to 35 (MALPSAFLNPFVPSPVTANPRTKFARVGKGFNVSC) constitute a chloroplast transit peptide. Tyrosine 103, arginine 105, glycine 133, methionine 134, serine 252, and threonine 254 together coordinate pyridoxal 5'-phosphate. N6-(pyridoxal phosphate)lysine is present on lysine 255.

This sequence belongs to the trans-sulfuration enzymes family. As to quaternary structure, forms homodimers. May form homotetramers from two homodimers. The cofactor is pyridoxal 5'-phosphate.

The protein localises to the plastid. Its subcellular location is the chloroplast. It carries out the reaction L-mimosine + H2O = 3-hydroxy-4H-pyrid-4-one + pyruvate + NH4(+). It catalyses the reaction L,L-cystathionine + H2O = L-homocysteine + pyruvate + NH4(+). The enzyme catalyses an S-substituted L-cysteine + H2O = a thiol + pyruvate + NH4(+). Catalyzes the degradation of mimosine, which is a toxic secondary metabolite found in all Mimosa and Leucaena species. Catalyzes the degradation of cystathionine, but seems to have lower preference toward cystathionine over mimosine. The polypeptide is Mimosinase, chloroplastic (Mimosa pudica (Sensitive plant)).